The following is a 157-amino-acid chain: uncharacterized protein (157 aa).

The N-acetyltransferase domain maps to 9–146 (LLINYKTLDE…GDFYVWHPET (138 aa)).

This is an uncharacterized protein from Bacillus anthracis (strain CDC 684 / NRRL 3495).